Here is a 96-residue protein sequence, read N- to C-terminus: Prokineticin Bv8 (96 aa).

The signal sequence occupies residues Met1–Gly19. The may be important for binding to prokineticin receptor 2 stretch occupies residues Ala20–Gly24. Intrachain disulfides connect Cys26-Cys38, Cys32-Cys50, Cys37-Cys78, Cys60-Cys86, and Cys80-Cys95.

Expressed by the skin glands.

The protein resides in the secreted. Its function is as follows. Potent agonist for both PKR1/PROKR1 and PKR2/PROKR2, and inducer of a potent and long-lasting hyperalgesia. Shows an EC(50) of 0.264 nM, when tested on neuroblastoma cells (SH-SY5Y) which endogenously express mainly PKR2/PROKR2. Also potentiates capsaicin-induced TRPV1 current, when tested on DRG neurons. Induces a biphasic hyperalgesia to tactile and thermal stimuli after systemic injection of this protein into rat. The initial phase of hyperalgesia is caused by a local action on nociceptors, because intraplantar injection of this protein causes a strong and localized hyperalgesia with a similar time course to that of the initial phase of hyperalgesia seen with systemic injection. The secondary phase of hyperalgesia is not seen with local intraplantar injection and is therefore probably attributable to a central action of this protein. At subnanomolar concentrations, this protein both induces potent chemotaxis of macrophages and stimulates LPS-induced production of the pro-inflammatory cytokines IL-1 and IL-12. In vivo, this protein potently stimulates the contraction of the guinea-pig gastrointestinal (GI) smooth muscle (at nanomolar concentration). This chain is Prokineticin Bv8, found in Bombina variegata (Yellow-bellied toad).